Here is a 304-residue protein sequence, read N- to C-terminus: dTDP-4-dehydrorhamnose reductase (304 aa).

NADH-binding positions include 15–17, 41–42, and 63–65; these read GQL, DI, and AYT. NADPH is bound by residues 16–17, 41–42, and 63–65; these read QL, DI, and AYT. A dTDP-beta-L-rhamnose-binding site is contributed by 104-105; that stretch reads TD. Tyr-132 and Lys-136 together coordinate NADH. NADPH-binding residues include Tyr-132 and Lys-136. Tyr-132 (proton donor/acceptor) is an active-site residue. DTDP-beta-L-rhamnose is bound at residue Trp-157.

It belongs to the dTDP-4-dehydrorhamnose reductase family. Mg(2+) is required as a cofactor.

It catalyses the reaction dTDP-beta-L-rhamnose + NADP(+) = dTDP-4-dehydro-beta-L-rhamnose + NADPH + H(+). The protein operates within carbohydrate biosynthesis; dTDP-L-rhamnose biosynthesis. Functionally, involved in the biosynthesis of the dTDP-L-rhamnose which is a component of the critical linker, D-N-acetylglucosamine-L-rhamnose disaccharide, which connects the galactan region of arabinogalactan to peptidoglycan via a phosphodiester linkage. Catalyzes the reduction of dTDP-6-deoxy-L-lyxo-4-hexulose to yield dTDP-L-rhamnose. The chain is dTDP-4-dehydrorhamnose reductase from Mycobacterium tuberculosis (strain CDC 1551 / Oshkosh).